The primary structure comprises 239 residues: Pyrroloquinoline-quinone synthase (239 aa).

It belongs to the PqqC family.

It carries out the reaction 6-(2-amino-2-carboxyethyl)-7,8-dioxo-1,2,3,4,7,8-hexahydroquinoline-2,4-dicarboxylate + 3 O2 = pyrroloquinoline quinone + 2 H2O2 + 2 H2O + H(+). Its pathway is cofactor biosynthesis; pyrroloquinoline quinone biosynthesis. Ring cyclization and eight-electron oxidation of 3a-(2-amino-2-carboxyethyl)-4,5-dioxo-4,5,6,7,8,9-hexahydroquinoline-7,9-dicarboxylic-acid to PQQ. This chain is Pyrroloquinoline-quinone synthase, found in Gluconobacter oxydans (strain 621H) (Gluconobacter suboxydans).